The sequence spans 239 residues: NAD(P)H-hydrate epimerase (239 aa).

In terms of domain architecture, YjeF N-terminal spans 14–220 (AAALDQELMS…EMAEQYNLDI (207 aa)). (6S)-NADPHX is bound at residue 64–68 (NNGGD). K(+) contacts are provided by Asn-65 and Asp-126. (6S)-NADPHX-binding positions include 130 to 136 (GFSFSGE) and Asp-159. Ser-162 serves as a coordination point for K(+).

It belongs to the NnrE/AIBP family. Requires K(+) as cofactor.

It localises to the cytoplasm. It is found in the mitochondrion. The catalysed reaction is (6R)-NADHX = (6S)-NADHX. It carries out the reaction (6R)-NADPHX = (6S)-NADPHX. Its function is as follows. Catalyzes the epimerization of the S- and R-forms of NAD(P)HX, a damaged form of NAD(P)H that is a result of enzymatic or heat-dependent hydration. This is a prerequisite for the S-specific NAD(P)H-hydrate dehydratase to allow the repair of both epimers of NAD(P)HX. The chain is NAD(P)H-hydrate epimerase from Phaeosphaeria nodorum (strain SN15 / ATCC MYA-4574 / FGSC 10173) (Glume blotch fungus).